Here is a 277-residue protein sequence, read N- to C-terminus: Large ribosomal subunit protein uL2 (277 aa).

A disordered region spans residues 226-277; the sequence is NPIDHPHGGGEGRTSGGRHPVTPWGKPTKGKKTRSNKSTNKFILISRHKRKK.

Belongs to the universal ribosomal protein uL2 family. As to quaternary structure, part of the 50S ribosomal subunit. Forms a bridge to the 30S subunit in the 70S ribosome.

Functionally, one of the primary rRNA binding proteins. Required for association of the 30S and 50S subunits to form the 70S ribosome, for tRNA binding and peptide bond formation. It has been suggested to have peptidyltransferase activity; this is somewhat controversial. Makes several contacts with the 16S rRNA in the 70S ribosome. This Rhodopseudomonas palustris (strain BisA53) protein is Large ribosomal subunit protein uL2.